The primary structure comprises 208 residues: Large ribosomal subunit protein uL3 (208 aa).

Residues 116 to 146 form a disordered region; it reads GFQGAIKRHGQSRGPMAHGSRYHRRPGSMGP.

This sequence belongs to the universal ribosomal protein uL3 family. As to quaternary structure, part of the 50S ribosomal subunit. Forms a cluster with proteins L14 and L19.

One of the primary rRNA binding proteins, it binds directly near the 3'-end of the 23S rRNA, where it nucleates assembly of the 50S subunit. This is Large ribosomal subunit protein uL3 from Streptococcus mutans serotype c (strain ATCC 700610 / UA159).